The sequence spans 352 residues: Phosphoribosylformylglycinamidine cyclo-ligase (352 aa).

The protein belongs to the AIR synthase family.

The protein localises to the cytoplasm. The catalysed reaction is 2-formamido-N(1)-(5-O-phospho-beta-D-ribosyl)acetamidine + ATP = 5-amino-1-(5-phospho-beta-D-ribosyl)imidazole + ADP + phosphate + H(+). It participates in purine metabolism; IMP biosynthesis via de novo pathway; 5-amino-1-(5-phospho-D-ribosyl)imidazole from N(2)-formyl-N(1)-(5-phospho-D-ribosyl)glycinamide: step 2/2. This chain is Phosphoribosylformylglycinamidine cyclo-ligase, found in Azoarcus sp. (strain BH72).